We begin with the raw amino-acid sequence, 236 residues long: Small ribosomal subunit protein uS2c (236 aa).

This sequence belongs to the universal ribosomal protein uS2 family.

It is found in the plastid. It localises to the chloroplast. The chain is Small ribosomal subunit protein uS2c (rps2) from Nymphaea alba (White water-lily).